Reading from the N-terminus, the 96-residue chain is MAKGQSLQDPYLNALRRERIPVSIYLVNGIKLQGQIESFDQFVILLKNTVNQMVYKHAISTVVPARSVSHHNNSNNSNQQNYQQEQQTDSNVEKAE.

In terms of domain architecture, Sm spans 9-68 (DPYLNALRRERIPVSIYLVNGIKLQGQIESFDQFVILLKNTVNQMVYKHAISTVVPARSV). The tract at residues 67-96 (SVSHHNNSNNSNQQNYQQEQQTDSNVEKAE) is disordered. Positions 72–87 (NNSNNSNQQNYQQEQQ) are enriched in low complexity.

Belongs to the Hfq family. As to quaternary structure, homohexamer.

RNA chaperone that binds small regulatory RNA (sRNAs) and mRNAs to facilitate mRNA translational regulation in response to envelope stress, environmental stress and changes in metabolite concentrations. Also binds with high specificity to tRNAs. The chain is RNA-binding protein Hfq from Pasteurella multocida (strain Pm70).